Consider the following 317-residue polypeptide: Protoheme IX farnesyltransferase (317 aa).

Helical transmembrane passes span 28-48 (IIPL…HGHI), 53-73 (LLIT…LNCI), 101-121 (LIFA…FVNL), 122-142 (LSAC…THWL), 150-170 (IVIG…AVTG), 178-198 (ILFA…ALMI), 223-243 (IWIY…PFQA), 246-266 (LFYA…AWEL), and 282-302 (YSIL…LPAV).

The protein belongs to the UbiA prenyltransferase family. Protoheme IX farnesyltransferase subfamily.

Its subcellular location is the cell inner membrane. It catalyses the reaction heme b + (2E,6E)-farnesyl diphosphate + H2O = Fe(II)-heme o + diphosphate. Its pathway is porphyrin-containing compound metabolism; heme O biosynthesis; heme O from protoheme: step 1/1. Functionally, converts heme B (protoheme IX) to heme O by substitution of the vinyl group on carbon 2 of heme B porphyrin ring with a hydroxyethyl farnesyl side group. The protein is Protoheme IX farnesyltransferase of Picosynechococcus sp. (strain ATCC 27264 / PCC 7002 / PR-6) (Agmenellum quadruplicatum).